Here is a 137-residue protein sequence, read N- to C-terminus: MNSSSQRNTVVYWGTGRRKTSVARVRLIPGTGKITINGRPGDHYLNFNPAYLAAVKAPLQTLGLSDSYDVLVNVYGGGLTGQADAIKQGAARALCELSADNRKPLKIEGHLSRDPRAKERRKYGLKKARKAPQFSKR.

The segment covering 105 to 117 has biased composition (basic and acidic residues); sequence LKIEGHLSRDPRA. The disordered stretch occupies residues 105–137; the sequence is LKIEGHLSRDPRAKERRKYGLKKARKAPQFSKR. The span at 118–137 shows a compositional bias: basic residues; that stretch reads KERRKYGLKKARKAPQFSKR.

It belongs to the universal ribosomal protein uS9 family.

This is Small ribosomal subunit protein uS9 from Prochlorococcus marinus (strain MIT 9211).